A 217-amino-acid polypeptide reads, in one-letter code: tRNA (guanine-N(7)-)-methyltransferase (217 aa).

S-adenosyl-L-methionine is bound by residues Glu44, Asp69, Asp96, and Asp118. The active site involves Asp118. Substrate is bound at residue Lys122. Positions 124 to 129 (RHEKRR) are interaction with RNA. Substrate contacts are provided by residues Asp154 and 193 to 196 (TEYE).

This sequence belongs to the class I-like SAM-binding methyltransferase superfamily. TrmB family.

It catalyses the reaction guanosine(46) in tRNA + S-adenosyl-L-methionine = N(7)-methylguanosine(46) in tRNA + S-adenosyl-L-homocysteine. It functions in the pathway tRNA modification; N(7)-methylguanine-tRNA biosynthesis. Functionally, catalyzes the formation of N(7)-methylguanine at position 46 (m7G46) in tRNA. The sequence is that of tRNA (guanine-N(7)-)-methyltransferase from Lactococcus lactis subsp. lactis (strain IL1403) (Streptococcus lactis).